Reading from the N-terminus, the 1220-residue chain is DNA-directed RNA polymerase subunit beta' (1220 aa).

Zn(2+)-binding residues include cysteine 60, cysteine 62, cysteine 75, and cysteine 78. Positions 449, 451, and 453 each coordinate Mg(2+). Residues cysteine 818, cysteine 892, cysteine 899, and cysteine 902 each coordinate Zn(2+).

This sequence belongs to the RNA polymerase beta' chain family. As to quaternary structure, the RNAP catalytic core consists of 2 alpha, 1 beta, 1 beta' and 1 omega subunit. When a sigma factor is associated with the core the holoenzyme is formed, which can initiate transcription. Mg(2+) serves as cofactor. Zn(2+) is required as a cofactor.

The enzyme catalyses RNA(n) + a ribonucleoside 5'-triphosphate = RNA(n+1) + diphosphate. Functionally, DNA-dependent RNA polymerase catalyzes the transcription of DNA into RNA using the four ribonucleoside triphosphates as substrates. In Lacticaseibacillus paracasei (strain ATCC 334 / BCRC 17002 / CCUG 31169 / CIP 107868 / KCTC 3260 / NRRL B-441) (Lactobacillus paracasei), this protein is DNA-directed RNA polymerase subunit beta'.